The primary structure comprises 395 residues: MSEPAENCSPRWKDEAIQNGYIPSYLDKDELCVVCGDKATGYHYRCITCEGCKGFFRRTIQKNLNPTYACKYEGKCVIDKVTRNQCQECRFKKCIAVGMATDLVLDDSKRLAKRKLIEENRERRRKEELQKTVWDRLEPTQEEWDLIRMVTEAHMATNAQGNHWKQKRKFLSAAGVKEDKPEEIGQASMANTPEGNKVDIEAFSQFTKIITPAITRVVDFAKKLPMFCELPCEDQIILLKGCCMEIMSLRAAVRYDPESETLTLNGEMAVTRGQLKNGGLGVVSDAIFDLGVSLSSFNLDDSEVALLQAVILLSSDRPGLSSVERIEPCQEEFLLAFEHYINYRKHKLAHFWPKLLMKVTDLRMIGACHASRFLHMKVECPTELFPPLFLEVFED.

The tract at residues 1-31 (MSEPAENCSPRWKDEAIQNGYIPSYLDKDEL) is modulating. Zn(2+) is bound by residues C32, C35, C49, C52, C70, C76, C86, and C89. NR C4-type zinc fingers lie at residues 32–52 (CVVC…CEGC) and 70–94 (CKYE…FKKC). Positions 32 to 99 (CVVCGDKATG…RFKKCIAVGM (68 aa)) form a DNA-binding region, nuclear receptor. In terms of domain architecture, NR LBD spans 142–395 (EEWDLIRMVT…PPLFLEVFED (254 aa)). The 3,3',5-triiodo-L-thyronine site is built by R216, N265, and H369. 3 residues coordinate L-thyroxine: R216, N265, and H369.

Belongs to the nuclear hormone receptor family. NR1 subfamily.

The protein resides in the nucleus. In terms of biological role, nuclear hormone receptor that can act as a repressor or activator of transcription. High affinity receptor for thyroid hormones, including triiodothyronine and thyroxine. The chain is Thyroid hormone receptor beta (thrb) from Paralichthys olivaceus (Bastard halibut).